A 370-amino-acid polypeptide reads, in one-letter code: MPLSKNVIEKISIETIRVLKSRFDTISDEDIKIRNMPFHMAFLRAFYGKIGINDDTEALKFLTLSQWFHGLSTTLGQSYFENIAHILSNGEKRTFKNYKIKRSVRDKISEIINDLKSGERLPNVEKENKELREATSKNSEYVNGLEFTADVYFEDKDKVVMIELKTVRPNAGEMRGEKQKILYGKAYMMETKPNKKVYYFIGFPYDPTENPENPCGYDKDRFMSSLIEFSKYFDKREVLIAEELWSFLSGEENTMKKILDIINSIAKPDFKEKFDFINTFPFINQDRLYTKDAIDEQKFKKYMDILQEWRLYSEIECAKAVKELSLLKLSSRDRRTFERLINNSMFSNNNKYNENRKMKILELYNKYMQK.

It belongs to the TdeIII type II restriction endonuclease family.

It carries out the reaction Endonucleolytic cleavage of DNA to give specific double-stranded fragments with terminal 5'-phosphates.. A P subtype restriction enzyme that recognizes the double-stranded sequence 5'-GGNCC-3'; the cleavage site is unknown. The polypeptide is Type II restriction enzyme MjaII (mjaIIR) (Methanocaldococcus jannaschii (strain ATCC 43067 / DSM 2661 / JAL-1 / JCM 10045 / NBRC 100440) (Methanococcus jannaschii)).